A 105-amino-acid chain; its full sequence is 5-hydroxymethyl-dUMP N-hydrolase (105 aa).

Residues Gly6, Ile8, Ser42, Gly44, Glu48, and Ser72 each contribute to the 5-hydroxymethyl-dUMP site.

The protein belongs to the 2'-deoxynucleoside 5'-phosphate N-hydrolase 1 family. Monomer and homodimer.

The protein resides in the cytoplasm. It localises to the nucleus. The enzyme catalyses 5-hydroxymethyl-dUMP + H2O = 5-hydroxymethyluracil + 2-deoxy-D-ribose 5-phosphate. Functionally, part of a nucleotide salvage pathway that eliminates epigenetically modified 5-hydroxymethyl-dCMP (hmdCMP) in a two-step process entailing deamination to cytotoxic 5-hydroxymethyl-dUMP (hmdUMP), followed by its hydrolysis into 5-hydroxymethyluracil (hmU) and 2-deoxy-D-ribose 5-phosphate (deoxyribosephosphate). Catalyzes the second step in that pathway, the hydrolysis of the N-glycosidic bond in hmdUMP, degrading this cytotoxic nucleotide to avoid its genomic integration. The sequence is that of 5-hydroxymethyl-dUMP N-hydrolase from Branchiostoma floridae (Florida lancelet).